Consider the following 172-residue polypeptide: Endoribonuclease YbeY (172 aa).

His124, His128, and His134 together coordinate Zn(2+).

The protein belongs to the endoribonuclease YbeY family. Requires Zn(2+) as cofactor.

The protein resides in the cytoplasm. Its function is as follows. Single strand-specific metallo-endoribonuclease involved in late-stage 70S ribosome quality control and in maturation of the 3' terminus of the 16S rRNA. The chain is Endoribonuclease YbeY from Rhodopseudomonas palustris (strain BisA53).